Here is a 220-residue protein sequence, read N- to C-terminus: RING-H2 finger protein ATL77 (220 aa).

The helical transmembrane segment at 53-73 threads the bilayer; that stretch reads LMLLSILLCGIICSLGLHYII. Residues 130 to 172 form an RING-type; atypical zinc finger; it reads CVICLSDFVAGEQLRVLPKCNHGFHLRCIDKWLTQHMTCPKCR.

This sequence belongs to the RING-type zinc finger family. ATL subfamily.

The protein resides in the membrane. It carries out the reaction S-ubiquitinyl-[E2 ubiquitin-conjugating enzyme]-L-cysteine + [acceptor protein]-L-lysine = [E2 ubiquitin-conjugating enzyme]-L-cysteine + N(6)-ubiquitinyl-[acceptor protein]-L-lysine.. It functions in the pathway protein modification; protein ubiquitination. This Arabidopsis thaliana (Mouse-ear cress) protein is RING-H2 finger protein ATL77 (ATL77).